The chain runs to 257 residues: Enterotoxin type E (257 aa).

The signal sequence occupies residues 1 to 27 (MKKTAFILLLFIALTLTTSPLVNGSEK). A disulfide bond links C120 and C130. H211, H249, and D251 together coordinate Zn(2+).

It belongs to the staphylococcal/streptococcal toxin family. Interacts with host MHC class II molecules composed of alpha/HLA-DRA and beta/HLA-DRB1 chains. Interacts with host T-cell receptor beta variable TRBV7-9. It depends on Zn(2+) as a cofactor.

It localises to the secreted. Its function is as follows. Staphylococcal enterotoxin that activates the host immune system by binding as unprocessed molecules to major histocompatibility (MHC) complex class II and T-cell receptor (TCR) molecules. In turn, this ternary complex activates a large number of T-lymphocytes initiating a systemic release of pro-inflammatory cytokines. Also causes the intoxication staphylococcal food poisoning syndrome. In Staphylococcus aureus, this protein is Enterotoxin type E (entE).